A 368-amino-acid polypeptide reads, in one-letter code: Solute carrier family 35 member G1 (368 aa).

10 helical membrane passes run 72-92 (GLGL…SLFV), 100-120 (AVEI…PCLI), 134-154 (LFLF…YYAF), 161-181 (DATV…WIFL), 190-210 (AFFT…PFIF), 225-245 (IKGT…LVIL), 256-276 (LSIW…LFVI), 289-309 (LFLI…TKAV), 316-336 (LVAI…IAFF), and 340-360 (PTWW…GATI). 2 consecutive EamA domains span residues 83–205 (FLFS…LIVR) and 236–360 (VLAA…GATI).

Belongs to the TMEM20 family. Interacts with STIM1; stimulated by depletion of intracellular calcium. Interacts with ORAI1. Interacts with the plasma membrane calcium-transporting ATPases ATP2B1 and ATP2B4. Interacts with ATP1A1, ATP2A2, KPNB1 and XPO1.

The protein localises to the cell membrane. It localises to the endoplasmic reticulum membrane. In terms of biological role, may play a role in intracellular calcium sensing and homeostasis. May act as a negative regulator of plasma membrane calcium-transporting ATPases preventing calcium efflux from the cell. The protein is Solute carrier family 35 member G1 (Slc35g1) of Mus musculus (Mouse).